The primary structure comprises 92 residues: Large ribosomal subunit protein eL31 (92 aa).

It belongs to the eukaryotic ribosomal protein eL31 family.

The sequence is that of Large ribosomal subunit protein eL31 from Pyrobaculum arsenaticum (strain DSM 13514 / JCM 11321 / PZ6).